We begin with the raw amino-acid sequence, 184 residues long: Small ribosomal subunit protein uS7 (184 aa).

It belongs to the universal ribosomal protein uS7 family. Part of the 30S ribosomal subunit.

Its function is as follows. One of the primary rRNA binding proteins, it binds directly to 16S rRNA where it nucleates assembly of the head domain of the 30S subunit. Is located at the subunit interface close to the decoding center. The polypeptide is Small ribosomal subunit protein uS7 (Thermoplasma volcanium (strain ATCC 51530 / DSM 4299 / JCM 9571 / NBRC 15438 / GSS1)).